The following is a 241-amino-acid chain: Polyol phosphate phosphatase PYP1 (241 aa).

Residue Asp9 is the Nucleophile of the active site. Residues Asp9, Asp11, and Asp179 each contribute to the Mg(2+) site. The active-site Proton donor is the Asp11.

Belongs to the HAD-like hydrolase superfamily. Mg(2+) serves as cofactor.

It is found in the cytoplasm. The protein resides in the nucleus. It carries out the reaction D-ribitol 5-phosphate + H2O = ribitol + phosphate. The catalysed reaction is D-sorbitol 6-phosphate + H2O = D-sorbitol + phosphate. It catalyses the reaction sn-glycerol 1-phosphate + H2O = glycerol + phosphate. The enzyme catalyses D-erythrose 4-phosphate + H2O = D-erythrose + phosphate. Its function is as follows. Hydrolyzes sugar alcohol (polyol) phosphates. Dephosphorylates a variety of substrates, including: sn-glycerol 1-phosphate (D-glycerol 3-phosphate), D-ribitol 5-phosphate, D-sorbitol 6-phosphate (D-glucitol 6-phosphate), and D-erythrose 4-phosphate. Prevents accumulation of toxic levels of polyol phosphates, which can impair glycolysis by inhibiting glucose-6-phosphate isomerase. This chain is Polyol phosphate phosphatase PYP1, found in Saccharomyces cerevisiae (strain ATCC 204508 / S288c) (Baker's yeast).